A 134-amino-acid chain; its full sequence is Profilin-4 (134 aa).

Cys13 and Cys118 form a disulfide bridge. The Involved in PIP2 interaction signature appears at 84-100 (AVIRGKKGSGGITIKKT). Phosphothreonine is present on Thr114.

It belongs to the profilin family. In terms of assembly, occurs in many kinds of cells as a complex with monomeric actin in a 1:1 ratio. In terms of processing, phosphorylated by MAP kinases.

The protein localises to the cytoplasm. It localises to the cytoskeleton. Its function is as follows. Binds to actin and affects the structure of the cytoskeleton. At high concentrations, profilin prevents the polymerization of actin, whereas it enhances it at low concentrations. The polypeptide is Profilin-4 (Olea europaea (Common olive)).